Here is a 133-residue protein sequence, read N- to C-terminus: Profilin (133 aa).

This sequence belongs to the profilin family. As to quaternary structure, occurs in many kinds of cells as a complex with monomeric actin in a 1:1 ratio.

The protein localises to the cytoplasm. The protein resides in the cytoskeleton. In terms of biological role, binds to actin and affects the structure of the cytoskeleton. At high concentrations, profilin prevents the polymerization of actin, whereas it enhances it at low concentrations. By binding to PIP2, it inhibits the formation of IP3 and DG. In Mercurialis annua (Annual mercury), this protein is Profilin.